The primary structure comprises 451 residues: Clusterin (451 aa).

Residues 1–18 form the signal peptide; that stretch reads MELPLLALLSLGLVCQGG. 5 disulfide bridges follow: cysteine 98-cysteine 314, cysteine 109-cysteine 306, cysteine 112-cysteine 303, cysteine 117-cysteine 296, and cysteine 125-cysteine 286. N-linked (GlcNAc...) asparagine glycosylation is found at asparagine 99, asparagine 141, asparagine 278, asparagine 355, asparagine 375, and asparagine 447.

The protein belongs to the clusterin family. In terms of assembly, antiparallel disulfide-linked heterodimer of an alpha chain and a beta chain. Self-associates and forms higher oligomers. Interacts with a broad range of misfolded proteins. Post-translationally, proteolytically cleaved on its way through the secretory system, probably within the Golgi lumen. In terms of processing, polyubiquitinated, leading to proteasomal degradation.

It is found in the secreted. The protein localises to the cytoplasmic vesicle. Its subcellular location is the secretory vesicle. The protein resides in the chromaffin granule. It localises to the nucleus. It is found in the cytoplasm. The protein localises to the mitochondrion membrane. Its subcellular location is the cytosol. The protein resides in the endoplasmic reticulum. Functionally, functions as extracellular chaperone that prevents aggregation of nonnative proteins. Prevents stress-induced aggregation of blood plasma proteins. Does not require ATP. Maintains partially unfolded proteins in a state appropriate for subsequent refolding by other chaperones, such as HSPA8/HSC70. Does not refold proteins by itself. Binding to cell surface receptors triggers internalization of the chaperone-client complex and subsequent lysosomal or proteasomal degradation. When secreted, protects cells against apoptosis and against cytolysis by complement: inhibits assembly of the complement membrane attack complex (MAC) by preventing polymerization of C9 pore component of the MAC complex. Intracellular forms interact with ubiquitin and SCF (SKP1-CUL1-F-box protein) E3 ubiquitin-protein ligase complexes and promote the ubiquitination and subsequent proteasomal degradation of target proteins. Modulates NF-kappa-B transcriptional activity. Promotes apoptosis when in the nucleus. Inhibits apoptosis when associated with the mitochondrial membrane by interference with BAX-dependent release of cytochrome c into the cytoplasm. Plays a role in the regulation of cell proliferation. This is Clusterin (CLU) from Coturnix japonica (Japanese quail).